We begin with the raw amino-acid sequence, 205 residues long: Small ribosomal subunit protein uS4 (205 aa).

Positions 95–156 (SRLDNIVYRM…KTIKIPIVKA (62 aa)) constitute an S4 RNA-binding domain.

The protein belongs to the universal ribosomal protein uS4 family. Part of the 30S ribosomal subunit. Contacts protein S5. The interaction surface between S4 and S5 is involved in control of translational fidelity.

Its function is as follows. One of the primary rRNA binding proteins, it binds directly to 16S rRNA where it nucleates assembly of the body of the 30S subunit. In terms of biological role, with S5 and S12 plays an important role in translational accuracy. The sequence is that of Small ribosomal subunit protein uS4 from Mycoplasma pneumoniae (strain ATCC 29342 / M129 / Subtype 1) (Mycoplasmoides pneumoniae).